Reading from the N-terminus, the 224-residue chain is Small ribosomal subunit protein uS3 (224 aa).

The region spanning 39 to 107 (IREFLKKKPS…DVWVEIAEVK (69 aa)) is the KH type-2 domain.

This sequence belongs to the universal ribosomal protein uS3 family. As to quaternary structure, part of the 30S ribosomal subunit. Forms a tight complex with proteins S10 and S14.

Binds the lower part of the 30S subunit head. Binds mRNA in the 70S ribosome, positioning it for translation. The protein is Small ribosomal subunit protein uS3 of Chlamydia trachomatis serovar A (strain ATCC VR-571B / DSM 19440 / HAR-13).